A 442-amino-acid chain; its full sequence is tRNA modification GTPase MnmE (442 aa).

The (6S)-5-formyl-5,6,7,8-tetrahydrofolate site is built by Arg-27, Glu-84, and Lys-124. Positions 221–366 constitute a TrmE-type G domain; that stretch reads GLHVVIVGAP…LLDALQAFAE (146 aa). Residues 231–236, 250–256, and 275–278 contribute to the GTP site; these read NAGKSS, SEEAGTT, and DTAG. Mg(2+)-binding residues include Ser-235 and Thr-256. Lys-442 contacts (6S)-5-formyl-5,6,7,8-tetrahydrofolate.

Belongs to the TRAFAC class TrmE-Era-EngA-EngB-Septin-like GTPase superfamily. TrmE GTPase family. As to quaternary structure, homodimer. Heterotetramer of two MnmE and two MnmG subunits. K(+) serves as cofactor.

Its subcellular location is the cytoplasm. Exhibits a very high intrinsic GTPase hydrolysis rate. Involved in the addition of a carboxymethylaminomethyl (cmnm) group at the wobble position (U34) of certain tRNAs, forming tRNA-cmnm(5)s(2)U34. The protein is tRNA modification GTPase MnmE of Brucella suis (strain ATCC 23445 / NCTC 10510).